Here is a 290-residue protein sequence, read N- to C-terminus: Elongation factor Ts (290 aa).

Residues 81–84 (TDFV) form an involved in Mg(2+) ion dislocation from EF-Tu region.

Belongs to the EF-Ts family.

The protein resides in the cytoplasm. Its function is as follows. Associates with the EF-Tu.GDP complex and induces the exchange of GDP to GTP. It remains bound to the aminoacyl-tRNA.EF-Tu.GTP complex up to the GTP hydrolysis stage on the ribosome. This is Elongation factor Ts from Saccharophagus degradans (strain 2-40 / ATCC 43961 / DSM 17024).